An 852-amino-acid chain; its full sequence is Bifunctional heparan sulfate N-deacetylase/N-sulfotransferase 1 (852 aa).

Topologically, residues 1–13 are cytoplasmic; the sequence is MIITPYLNRKITR. Residues 14 to 34 form a helical; Signal-anchor for type II membrane protein membrane-spanning segment; that stretch reads PLKWILALIFLYLIYICLFSN. The tract at residues 34-574 is heparan sulfate N-deacetylase 1; sequence NNSKPPKPRK…PRHHAILPPS (541 aa). Topologically, residues 35–852 are lumenal; sequence NSKPPKPRKK…WLEESVRIRA (818 aa). N-linked (GlcNAc...) asparagine glycosylation is found at Asn50, Asn72, Asn261, Asn328, Asn377, Asn428, and Asn576. Positions 575–852 are heparan sulfate N-sulfotransferase 1; the sequence is INCTKKSLPD…WLEESVRIRA (278 aa). Lys592 (for sulfotransferase activity) is an active-site residue. 592 to 596 lines the 3'-phosphoadenylyl sulfate pocket; that stretch reads KTGST. Asn607 is a glycosylation site (N-linked (GlcNAc...) asparagine). Ser686 provides a ligand contact to 3'-phosphoadenylyl sulfate. Asn712 carries an N-linked (GlcNAc...) asparagine glycan. Cys789 and Cys798 are oxidised to a cystine. A 3'-phosphoadenylyl sulfate-binding site is contributed by 803 to 807; that stretch reads KGRKY.

Belongs to the sulfotransferase 1 family. NDST subfamily. Monomer. In terms of tissue distribution, present in some specific neurons in head and tail regions and muscles.

The protein localises to the golgi apparatus membrane. The enzyme catalyses alpha-D-glucosaminyl-[heparan sulfate](n) + 3'-phosphoadenylyl sulfate = N-sulfo-alpha-D-glucosaminyl-[heparan sulfate](n) + adenosine 3',5'-bisphosphate + 2 H(+). The protein operates within glycan metabolism; heparan sulfate biosynthesis. It participates in glycan metabolism; heparin biosynthesis. Functionally, essential bifunctional enzyme that catalyzes both the N-deacetylation and the N-sulfation of glucosamine (GlcNAc) of the glycosaminoglycan in heparan sulfate. Modifies the GlcNAc-GlcA disaccharide repeating sugar backbone to make N-sulfated heparosan, a prerequisite substrate for later modifications in heparin biosynthesis. This is Bifunctional heparan sulfate N-deacetylase/N-sulfotransferase 1 (hst-1) from Caenorhabditis elegans.